The following is a 279-amino-acid chain: Diaminopimelate epimerase (279 aa).

Residues asparagine 11 and asparagine 64 each contribute to the substrate site. The Proton donor role is filled by cysteine 73. Residues 74-75 (GN), asparagine 170, and 187-188 (ER) contribute to the substrate site. Catalysis depends on cysteine 196, which acts as the Proton acceptor. 197–198 (GS) lines the substrate pocket. The interval 255-279 (NTDHQRRRHSLSRSPSGRPRLQECR) is disordered.

It belongs to the diaminopimelate epimerase family. Homodimer.

It localises to the cytoplasm. The enzyme catalyses (2S,6S)-2,6-diaminopimelate = meso-2,6-diaminopimelate. It functions in the pathway amino-acid biosynthesis; L-lysine biosynthesis via DAP pathway; DL-2,6-diaminopimelate from LL-2,6-diaminopimelate: step 1/1. Catalyzes the stereoinversion of LL-2,6-diaminopimelate (L,L-DAP) to meso-diaminopimelate (meso-DAP), a precursor of L-lysine. The protein is Diaminopimelate epimerase of Methanopyrus kandleri (strain AV19 / DSM 6324 / JCM 9639 / NBRC 100938).